The sequence spans 227 residues: ATP synthase F(0) complex subunit a (227 aa).

6 helical membrane passes run 14 to 34 (FLGI…FPTP), 69 to 89 (WAIL…LGLL), 99 to 119 (LSLN…IGMF), 139 to 159 (VPVL…ALGV), 165 to 185 (LTAG…LLTM), and 190 to 210 (ALLT…VAMI).

It belongs to the ATPase A chain family. Component of the ATP synthase complex composed at least of ATP5F1A/subunit alpha, ATP5F1B/subunit beta, ATP5MC1/subunit c (homooctomer), MT-ATP6/subunit a, MT-ATP8/subunit 8, ATP5ME/subunit e, ATP5MF/subunit f, ATP5MG/subunit g, ATP5MK/subunit k, ATP5MJ/subunit j, ATP5F1C/subunit gamma, ATP5F1D/subunit delta, ATP5F1E/subunit epsilon, ATP5PF/subunit F6, ATP5PB/subunit b, ATP5PD/subunit d, ATP5PO/subunit OSCP. ATP synthase complex consists of a soluble F(1) head domain (subunits alpha(3) and beta(3)) - the catalytic core - and a membrane F(0) domain - the membrane proton channel (subunits c, a, 8, e, f, g, k and j). These two domains are linked by a central stalk (subunits gamma, delta, and epsilon) rotating inside the F1 region and a stationary peripheral stalk (subunits F6, b, d, and OSCP). Interacts with DNAJC30; interaction is direct.

The protein resides in the mitochondrion inner membrane. It catalyses the reaction H(+)(in) = H(+)(out). In terms of biological role, subunit a, of the mitochondrial membrane ATP synthase complex (F(1)F(0) ATP synthase or Complex V) that produces ATP from ADP in the presence of a proton gradient across the membrane which is generated by electron transport complexes of the respiratory chain. ATP synthase complex consist of a soluble F(1) head domain - the catalytic core - and a membrane F(1) domain - the membrane proton channel. These two domains are linked by a central stalk rotating inside the F(1) region and a stationary peripheral stalk. During catalysis, ATP synthesis in the catalytic domain of F(1) is coupled via a rotary mechanism of the central stalk subunits to proton translocation. With the subunit c (ATP5MC1), forms the proton-conducting channel in the F(0) domain, that contains two crucial half-channels (inlet and outlet) that facilitate proton movement from the mitochondrial intermembrane space (IMS) into the matrix. Protons are taken up via the inlet half-channel and released through the outlet half-channel, following a Grotthuss mechanism. The protein is ATP synthase F(0) complex subunit a of Scyliorhinus canicula (Small-spotted catshark).